The primary structure comprises 267 residues: Diphthine synthase (267 aa).

S-adenosyl-L-methionine-binding positions include L9, D85, V88, 113-114, L170, A211, and H236; that span reads SI.

It belongs to the diphthine synthase family. As to quaternary structure, homodimer.

It carries out the reaction 2-[(3S)-amino-3-carboxypropyl]-L-histidyl-[translation elongation factor 2] + 3 S-adenosyl-L-methionine = diphthine-[translation elongation factor 2] + 3 S-adenosyl-L-homocysteine + 3 H(+). The protein operates within protein modification; peptidyl-diphthamide biosynthesis. Functionally, S-adenosyl-L-methionine-dependent methyltransferase that catalyzes the trimethylation of the amino group of the modified target histidine residue in translation elongation factor 2 (EF-2), to form an intermediate called diphthine. The three successive methylation reactions represent the second step of diphthamide biosynthesis. The sequence is that of Diphthine synthase from Methanococcoides burtonii (strain DSM 6242 / NBRC 107633 / OCM 468 / ACE-M).